The sequence spans 161 residues: Pupal cuticle protein C1B (161 aa).

A run of 9 repeats spans residues 6 to 9 (AAPA), 14 to 17 (AAPA), 35 to 38 (AAPA), 87 to 90 (AAPV), 103 to 106 (AAPV), 112 to 115 (AAPV), 121 to 124 (AAPV), 130 to 133 (AAPV), and 143 to 146 (AAPA).

Component of the cuticle of the pupa of Tenebrio molitor. This is Pupal cuticle protein C1B from Tenebrio molitor (Yellow mealworm beetle).